A 543-amino-acid polypeptide reads, in one-letter code: Carotenoid 9,10(9',10')-cleavage dioxygenase 1 (543 aa).

H224, H272, H338, and H528 together coordinate Fe cation.

Belongs to the carotenoid oxygenase family. Homodimer. Fe(2+) serves as cofactor.

It carries out the reaction all-trans-zeaxanthin + 2 O2 = 4,9-dimethyldodeca-2,4,6,8,10-pentaenedial + 2 (3R)-hydroxy-beta-ionone. Cleaves a variety of carotenoids at the 9-10 and 9'-10' double bonds. Probably not involved in abscisic acid biosynthesis. This is Carotenoid 9,10(9',10')-cleavage dioxygenase 1 (CCD1) from Phaseolus vulgaris (Kidney bean).